A 163-amino-acid polypeptide reads, in one-letter code: Large ribosomal subunit protein uL10 (163 aa).

This sequence belongs to the universal ribosomal protein uL10 family. Part of the ribosomal stalk of the 50S ribosomal subunit. The N-terminus interacts with L11 and the large rRNA to form the base of the stalk. The C-terminus forms an elongated spine to which L12 dimers bind in a sequential fashion forming a multimeric L10(L12)X complex.

Forms part of the ribosomal stalk, playing a central role in the interaction of the ribosome with GTP-bound translation factors. The protein is Large ribosomal subunit protein uL10 of Haemophilus influenzae (strain 86-028NP).